The sequence spans 198 residues: Recombination protein RecR (198 aa).

The C4-type zinc-finger motif lies at Cys-56 to Cys-71. The Toprim domain maps to Ala-79–Pro-174.

The protein belongs to the RecR family.

May play a role in DNA repair. It seems to be involved in an RecBC-independent recombinational process of DNA repair. It may act with RecF and RecO. In Leifsonia xyli subsp. xyli (strain CTCB07), this protein is Recombination protein RecR.